The following is a 424-amino-acid chain: MLQLATYLHSQGISITIAQYPNFNSPDSSNHPELTFLPLSSGNLSVADISGGFFKFIQTLNHNCKPHFREYLVQNMSSDDKESIVIIRDNLMFFAGEIAGELGLPSIILRGSNAVMLTASDIIPQLHQEGRFPPPDSLLQETIPELVPFRYKDLPFIGYPIHQTLEFSITMMTPKSPASAILINTLEFLEQSALTQIRDHYKVPVFTIGPLHKIVTTRSTSILEEDTSCINWLDKQSPKSVVYVSLGSLAKLDEKVASEMACGLAMSNHKFLWVVRPGMVHGFEWVEFLPDSLVGEMKARGLIVKWAPQTTVLAHNAVGGFWSHCGWNSTIECLAEGVPMMCQPFFADQLLNARYVSDVWKTGFEIVIEKGEIACAIKRVLVDEEGEEMRQRAMEIKEKVKIAINDGGSSYDSFKDLVAFISSL.

UDP-alpha-D-glucose contacts are provided by residues Ser-248, 306-307 (WA), 324-332 (HCGWNSTIE), and 346-349 (FADQ).

Belongs to the UDP-glycosyltransferase family.

May glycosylate diterpenes or flavonols in leaves. In Stevia rebaudiana (Stevia), this protein is UDP-glycosyltransferase 76H1.